Consider the following 186-residue polypeptide: Enhancer of split m7 protein (186 aa).

In terms of domain architecture, bHLH spans 13–68; that stretch reads YRKVMKPLLERKRRARINKCLDELKDLMAECVAQTGDAKFEKADILEVTVQHLRKL. One can recognise an Orange domain in the interval 83–116; the sequence is FRAGYIRAANEVSRALASLPRVDVAFGTTLMTHL. The short motif at 183 to 186 is the WRPW motif element; it reads WRPW.

Transcription repression requires formation of a complex with a corepressor protein (Groucho). Forms homodimers.

It is found in the nucleus. In terms of biological role, participates in the control of cell fate choice by uncommitted neuroectodermal cells in the embryo. Transcriptional repressor. Binds DNA on N-box motifs: 5'-CACNAG-3'. The sequence is that of Enhancer of split m7 protein from Drosophila melanogaster (Fruit fly).